A 673-amino-acid polypeptide reads, in one-letter code: Ion-translocating oxidoreductase complex subunit C (673 aa).

4Fe-4S ferredoxin-type domains are found at residues 368–397 (MGAP…QQLY) and 407–436 (KATA…VQYF). Positions 377, 380, 383, 387, 416, 419, 422, and 426 each coordinate [4Fe-4S] cluster. 2 disordered regions span residues 534–553 (QARA…SGGA) and 563–653 (IARA…AAVA).

It belongs to the 4Fe4S bacterial-type ferredoxin family. RnfC subfamily. As to quaternary structure, the complex is composed of six subunits: RsxA, RsxB, RsxC, RsxD, RsxE and RsxG. [4Fe-4S] cluster is required as a cofactor.

Its subcellular location is the cell inner membrane. Part of a membrane-bound complex that couples electron transfer with translocation of ions across the membrane. Required to maintain the reduced state of SoxR. The polypeptide is Ion-translocating oxidoreductase complex subunit C (Salmonella gallinarum (strain 287/91 / NCTC 13346)).